Consider the following 104-residue polypeptide: Salivary protein FS145 (104 aa).

The signal sequence occupies residues 1 to 18 (MKLFAVFLLFCLVNQIYC). Intrachain disulfides connect Cys-32–Cys-80, Cys-62–Cys-89, Cys-72–Cys-100, and Cys-76–Cys-102. Positions 92-94 (WGD) match the Putative integrin attachment site; atypical (WGD) motif.

In terms of assembly, interacts with host integrin alpha-V/beta-3 (ITGAV:ITGB3).

The protein localises to the secreted. In terms of biological role, inhibits proliferation, adhesion and migration of host cells as well as host angiogenesis by blocking host integrin alpha-V/beta-3 (ITGAV:ITGB3). This Xenopsylla cheopis (Oriental rat flea) protein is Salivary protein FS145.